Here is a 540-residue protein sequence, read N- to C-terminus: GMP synthase [glutamine-hydrolyzing] (540 aa).

Residues 29–222 (KILIVDFGSQ…VRKVAGLTGD (194 aa)) enclose the Glutamine amidotransferase type-1 domain. The active-site Nucleophile is the C106. Active-site residues include H196 and E198. A GMPS ATP-PPase domain is found at 223-415 (WTMRAFREEA…LGLPEIFVGR (193 aa)). 250-256 (SGGVDSA) provides a ligand contact to ATP.

In terms of assembly, homodimer.

It catalyses the reaction XMP + L-glutamine + ATP + H2O = GMP + L-glutamate + AMP + diphosphate + 2 H(+). Its pathway is purine metabolism; GMP biosynthesis; GMP from XMP (L-Gln route): step 1/1. Its function is as follows. Catalyzes the synthesis of GMP from XMP. In Rhodopseudomonas palustris (strain HaA2), this protein is GMP synthase [glutamine-hydrolyzing].